A 147-amino-acid chain; its full sequence is SsrA-binding protein (147 aa).

This sequence belongs to the SmpB family.

It localises to the cytoplasm. In terms of biological role, required for rescue of stalled ribosomes mediated by trans-translation. Binds to transfer-messenger RNA (tmRNA), required for stable association of tmRNA with ribosomes. tmRNA and SmpB together mimic tRNA shape, replacing the anticodon stem-loop with SmpB. tmRNA is encoded by the ssrA gene; the 2 termini fold to resemble tRNA(Ala) and it encodes a 'tag peptide', a short internal open reading frame. During trans-translation Ala-aminoacylated tmRNA acts like a tRNA, entering the A-site of stalled ribosomes, displacing the stalled mRNA. The ribosome then switches to translate the ORF on the tmRNA; the nascent peptide is terminated with the 'tag peptide' encoded by the tmRNA and targeted for degradation. The ribosome is freed to recommence translation, which seems to be the essential function of trans-translation. This Mycoplasmopsis fermentans (strain ATCC 19989 / NBRC 14854 / NCTC 10117 / PG18) (Mycoplasma fermentans) protein is SsrA-binding protein.